Consider the following 148-residue polypeptide: Holo-[acyl-carrier-protein] synthase (148 aa).

Mg(2+) is bound by residues D8 and E57.

This sequence belongs to the P-Pant transferase superfamily. AcpS family. Requires Mg(2+) as cofactor.

The protein resides in the cytoplasm. The enzyme catalyses apo-[ACP] + CoA = holo-[ACP] + adenosine 3',5'-bisphosphate + H(+). Transfers the 4'-phosphopantetheine moiety from coenzyme A to a Ser of acyl-carrier-protein. The chain is Holo-[acyl-carrier-protein] synthase from Ruegeria pomeroyi (strain ATCC 700808 / DSM 15171 / DSS-3) (Silicibacter pomeroyi).